The following is an 86-amino-acid chain: Large ribosomal subunit protein bL27 (86 aa).

Positions 1-21 (MAHHKGGGSSRNGKDSNPQYL) are disordered.

It belongs to the bacterial ribosomal protein bL27 family.

This Coprothermobacter proteolyticus (strain ATCC 35245 / DSM 5265 / OCM 4 / BT) protein is Large ribosomal subunit protein bL27.